The following is a 290-amino-acid chain: Pyridoxal kinase PdxY (290 aa).

Residues Ser-12 and 47–48 contribute to the substrate site; that span reads TQ. ATP is bound by residues Asp-114, Glu-151, Lys-184, and 211-214; that span reads RPLL. Residue Asp-225 coordinates substrate.

It belongs to the pyridoxine kinase family. PdxY subfamily. As to quaternary structure, homodimer. Requires Mg(2+) as cofactor.

The catalysed reaction is pyridoxal + ATP = pyridoxal 5'-phosphate + ADP + H(+). Its pathway is cofactor metabolism; pyridoxal 5'-phosphate salvage; pyridoxal 5'-phosphate from pyridoxal: step 1/1. Its function is as follows. Pyridoxal kinase involved in the salvage pathway of pyridoxal 5'-phosphate (PLP). Catalyzes the phosphorylation of pyridoxal to PLP. This chain is Pyridoxal kinase PdxY, found in Pseudomonas putida (strain GB-1).